Here is a 314-residue protein sequence, read N- to C-terminus: tRNA dimethylallyltransferase 1 (314 aa).

Position 8-15 (8-15 (GPTGSGKS)) interacts with ATP. 10–15 (TGSGKS) contacts substrate.

The protein belongs to the IPP transferase family. Monomer. It depends on Mg(2+) as a cofactor.

The catalysed reaction is adenosine(37) in tRNA + dimethylallyl diphosphate = N(6)-dimethylallyladenosine(37) in tRNA + diphosphate. Functionally, catalyzes the transfer of a dimethylallyl group onto the adenine at position 37 in tRNAs that read codons beginning with uridine, leading to the formation of N6-(dimethylallyl)adenosine (i(6)A). In Mycobacterium ulcerans (strain Agy99), this protein is tRNA dimethylallyltransferase 1.